A 262-amino-acid polypeptide reads, in one-letter code: Acyl-[acyl-carrier-protein]--UDP-N-acetylglucosamine O-acyltransferase (262 aa).

It belongs to the transferase hexapeptide repeat family. LpxA subfamily. Homotrimer.

Its subcellular location is the cytoplasm. It carries out the reaction a (3R)-hydroxyacyl-[ACP] + UDP-N-acetyl-alpha-D-glucosamine = a UDP-3-O-[(3R)-3-hydroxyacyl]-N-acetyl-alpha-D-glucosamine + holo-[ACP]. It functions in the pathway glycolipid biosynthesis; lipid IV(A) biosynthesis; lipid IV(A) from (3R)-3-hydroxytetradecanoyl-[acyl-carrier-protein] and UDP-N-acetyl-alpha-D-glucosamine: step 1/6. Functionally, involved in the biosynthesis of lipid A, a phosphorylated glycolipid that anchors the lipopolysaccharide to the outer membrane of the cell. This chain is Acyl-[acyl-carrier-protein]--UDP-N-acetylglucosamine O-acyltransferase, found in Yersinia pseudotuberculosis serotype O:1b (strain IP 31758).